The chain runs to 167 residues: Protein-export protein SecB (167 aa).

This sequence belongs to the SecB family. As to quaternary structure, homotetramer, a dimer of dimers. One homotetramer interacts with 1 SecA dimer.

The protein localises to the cytoplasm. Its function is as follows. One of the proteins required for the normal export of preproteins out of the cell cytoplasm. It is a molecular chaperone that binds to a subset of precursor proteins, maintaining them in a translocation-competent state. It also specifically binds to its receptor SecA. The polypeptide is Protein-export protein SecB (Wolbachia pipientis subsp. Culex pipiens (strain wPip)).